The primary structure comprises 212 residues: Probable transaldolase (212 aa).

The active-site Schiff-base intermediate with substrate is Lys-84.

The protein belongs to the transaldolase family. Type 3B subfamily.

It is found in the cytoplasm. It carries out the reaction D-sedoheptulose 7-phosphate + D-glyceraldehyde 3-phosphate = D-erythrose 4-phosphate + beta-D-fructose 6-phosphate. It participates in carbohydrate degradation; pentose phosphate pathway; D-glyceraldehyde 3-phosphate and beta-D-fructose 6-phosphate from D-ribose 5-phosphate and D-xylulose 5-phosphate (non-oxidative stage): step 2/3. Transaldolase is important for the balance of metabolites in the pentose-phosphate pathway. The chain is Probable transaldolase from Bacillus pumilus (strain SAFR-032).